A 108-amino-acid polypeptide reads, in one-letter code: U-scoloptoxin(16)-Sm1a (108 aa).

Residues 1-19 (MNLFLVLFVFSFSVSQFFA) form the signal peptide.

It belongs to the scoloptoxin-16 family. Contains 4 disulfide bonds. In terms of tissue distribution, expressed by the venom gland.

The protein resides in the secreted. In Scolopendra morsitans (Tanzanian blue ringleg centipede), this protein is U-scoloptoxin(16)-Sm1a.